The primary structure comprises 457 residues: tRNA modification GTPase MnmE (457 aa).

3 residues coordinate (6S)-5-formyl-5,6,7,8-tetrahydrofolate: arginine 23, glutamate 85, and arginine 124. The TrmE-type G domain maps to 220–376 (GALVVLAGQV…LVTAIRAAVL (157 aa)). Asparagine 230 provides a ligand contact to K(+). GTP is bound by residues 230–235 (NAGKSS), 249–255 (TDLPGTT), and 274–277 (DTAG). Residue serine 234 participates in Mg(2+) binding. Positions 249, 251, and 254 each coordinate K(+). A Mg(2+)-binding site is contributed by threonine 255. Residue lysine 457 participates in (6S)-5-formyl-5,6,7,8-tetrahydrofolate binding.

This sequence belongs to the TRAFAC class TrmE-Era-EngA-EngB-Septin-like GTPase superfamily. TrmE GTPase family. In terms of assembly, homodimer. Heterotetramer of two MnmE and two MnmG subunits. K(+) is required as a cofactor.

It is found in the cytoplasm. Exhibits a very high intrinsic GTPase hydrolysis rate. Involved in the addition of a carboxymethylaminomethyl (cmnm) group at the wobble position (U34) of certain tRNAs, forming tRNA-cmnm(5)s(2)U34. This Nitratidesulfovibrio vulgaris (strain ATCC 29579 / DSM 644 / CCUG 34227 / NCIMB 8303 / VKM B-1760 / Hildenborough) (Desulfovibrio vulgaris) protein is tRNA modification GTPase MnmE.